A 1780-amino-acid polypeptide reads, in one-letter code: Protein TIC 214 (1780 aa).

6 helical membrane passes run 19–39, 68–88, 91–111, 133–153, 176–196, and 227–247; these read IINS…FSIG, FIAG…HLAL, PHTI…WNNN, VFLN…SSML, VGWL…LVWI, and IFSI…PSPI. Residues 251-275 form a disordered region; sequence KLKGTSETEERGGTKQDQEVSTEEA. Positions 254 to 268 are enriched in basic and acidic residues; sequence GTSETEERGGTKQDQ.

This sequence belongs to the TIC214 family. As to quaternary structure, part of the Tic complex.

It localises to the plastid. It is found in the chloroplast inner membrane. In terms of biological role, involved in protein precursor import into chloroplasts. May be part of an intermediate translocation complex acting as a protein-conducting channel at the inner envelope. This chain is Protein TIC 214, found in Draba nemorosa (Woodland whitlowgrass).